A 182-amino-acid polypeptide reads, in one-letter code: ATP-dependent protease subunit HslV (182 aa).

The active site involves T10. 3 residues coordinate Na(+): A166, C169, and S172.

The protein belongs to the peptidase T1B family. HslV subfamily. As to quaternary structure, a double ring-shaped homohexamer of HslV is capped on each side by a ring-shaped HslU homohexamer. The assembly of the HslU/HslV complex is dependent on binding of ATP.

It localises to the cytoplasm. It catalyses the reaction ATP-dependent cleavage of peptide bonds with broad specificity.. With respect to regulation, allosterically activated by HslU binding. Functionally, protease subunit of a proteasome-like degradation complex believed to be a general protein degrading machinery. The sequence is that of ATP-dependent protease subunit HslV from Rickettsia felis (strain ATCC VR-1525 / URRWXCal2) (Rickettsia azadi).